The primary structure comprises 201 residues: Dermatopontin (201 aa).

Positions 1-18 are cleaved as a signal peptide; sequence MDLSLLWVLLPLVTMAWG. The residue at position 19 (Q19) is a Pyrrolidone carboxylic acid. Y23 is modified (sulfotyrosine). 4 repeat units span residues 26-79, 70-75, 80-135, and 125-130. Positions 26 to 186 are 2 X 53-55 AA tandem repeats; the sequence is PYQQYHDYSD…AVERDRQWKF (161 aa). Disulfide bonds link C50-C77, C90-C132, C106-C133, C139-C196, and C143-C189. The 3 X 6 AA repeats of D-R-[EQ]-W-[NQK]-[FY] stretch occupies residues 70-186; the sequence is DRQWNYACMP…AVERDRQWKF (117 aa). Sulfotyrosine occurs at positions 162, 164, 166, and 167. One copy of the 3-3 repeat lies at 181 to 186; sequence DRQWKF. The residue at position 194 (Y194) is a Sulfotyrosine.

This sequence belongs to the dermatopontin family. In terms of assembly, interacts with TGFB1, DCN and collagen. In terms of processing, sulfated on tyrosine residue(s). As to expression, expressed in fibroblasts, heart, skeletal muscle, brain and pancreas. Expressed at an intermediate level in lung and kidney, and at a low level in liver and placenta. Expressed at a lower level in fibroblasts from hypertrophic scar lesional skin and in fibroblasts from patients with systemic sclerosis than in normal skin fibroblasts.

The protein resides in the secreted. Its subcellular location is the extracellular space. It is found in the extracellular matrix. Seems to mediate adhesion by cell surface integrin binding. May serve as a communication link between the dermal fibroblast cell surface and its extracellular matrix environment. Enhances TGFB1 activity. Inhibits cell proliferation. Accelerates collagen fibril formation, and stabilizes collagen fibrils against low-temperature dissociation. The sequence is that of Dermatopontin (DPT) from Homo sapiens (Human).